The sequence spans 1071 residues: Kinesin-like protein KIN-14J (1071 aa).

The 104-residue stretch at 39–142 (KKGHQSLVEW…SLKALKASFS (104 aa)) folds into the Calponin-homology (CH) domain. The interval 157-181 (WSLPEDHSDSRGDDRNFTDGFQSKE) is disordered. Basic and acidic residues predominate over residues 158–173 (SLPEDHSDSRGDDRNF). Residues 299-389 (EKTRIEEKER…ELEKLCQSKS (91 aa)) adopt a coiled-coil conformation. The Kinesin motor domain maps to 472–800 (NIRVYCRIRP…LKFAERVSGV (329 aa)). 556-563 (GQTGSGKT) serves as a coordination point for ATP. Positions 811-844 (GRDVRQLMEQVSNLKDVIAKKDEELQNFQKVKGN) form a coiled coil. Disordered stretches follow at residues 852-931 (GLSN…AAKG) and 995-1071 (ARMT…NRRR). Composition is skewed to basic and acidic residues over residues 910-921 (SDERKHQKDYHQ) and 995-1017 (ARMTSEKLEKSVKMGKTEPKDRT). Over residues 1034–1049 (TRPSRLSIATSSSSKA) the composition is skewed to polar residues.

It belongs to the TRAFAC class myosin-kinesin ATPase superfamily. Kinesin family. KIN-14 subfamily.

This is Kinesin-like protein KIN-14J from Arabidopsis thaliana (Mouse-ear cress).